Consider the following 118-residue polypeptide: SPbeta prophage-derived uncharacterized protein YoqR (118 aa).

The polypeptide is SPbeta prophage-derived uncharacterized protein YoqR (yoqR) (Bacillus subtilis (strain 168)).